The following is a 625-amino-acid chain: 1-deoxy-D-xylulose-5-phosphate synthase (625 aa).

Residues His74 and 115-117 each bind thiamine diphosphate; that span reads GHS. A Mg(2+)-binding site is contributed by Asp146. Thiamine diphosphate is bound by residues 147–148, Asn175, Tyr286, and Glu367; that span reads GA. Residue Asn175 participates in Mg(2+) binding.

This sequence belongs to the transketolase family. DXPS subfamily. Homodimer. Mg(2+) is required as a cofactor. It depends on thiamine diphosphate as a cofactor.

The enzyme catalyses D-glyceraldehyde 3-phosphate + pyruvate + H(+) = 1-deoxy-D-xylulose 5-phosphate + CO2. It functions in the pathway metabolic intermediate biosynthesis; 1-deoxy-D-xylulose 5-phosphate biosynthesis; 1-deoxy-D-xylulose 5-phosphate from D-glyceraldehyde 3-phosphate and pyruvate: step 1/1. In terms of biological role, catalyzes the acyloin condensation reaction between C atoms 2 and 3 of pyruvate and glyceraldehyde 3-phosphate to yield 1-deoxy-D-xylulose-5-phosphate (DXP). In Lachnoclostridium phytofermentans (strain ATCC 700394 / DSM 18823 / ISDg) (Clostridium phytofermentans), this protein is 1-deoxy-D-xylulose-5-phosphate synthase.